A 364-amino-acid chain; its full sequence is Nucleoporin SEH1 (364 aa).

WD repeat units lie at residues 10 to 49 (DHKDLIHDVSYDFHGRRMATCSSDQSVKVWDKSDNGEWNC), 55 to 96 (THSG…SNDK), 111 to 152 (DSRT…NLSQ), 160 to 210 (SCKL…RKYA), 217 to 258 (TVTD…KESS), and 275 to 314 (GHNSQVWRVSWNITSTLLASSGDDGCVRLWKANYMDNWKC). The segment at 326 to 364 (NGAAGQAGTPGAAGTPGGPASQNALQAVAGRKKAQLMPG) is disordered. Low complexity predominate over residues 327–338 (GAAGQAGTPGAA). A compositionally biased stretch (basic residues) spans 355 to 364 (GRKKAQLMPG).

Belongs to the WD repeat SEC13 family. Component of the Nup107-160 subcomplex of the nuclear pore complex (NPC). The Nup107-160 subcomplex includes NUP160, NUP133, NUP107, NUP98, NUP85, NUP43, NUP37, SEH1 and SEC13. Component of the GATOR2 subcomplex, composed of MIOS, SEC13, SEH1L, WDR24 and WDR59. The GATOR2 complex interacts with CASTOR1 and CASTOR2; the interaction is negatively regulated by arginine. The GATOR2 complex interacts with SESN1, SESN2 and SESN3; the interaction is negatively regulated by amino acids.

The protein localises to the chromosome. It localises to the centromere. The protein resides in the kinetochore. It is found in the nucleus. Its subcellular location is the nuclear pore complex. The protein localises to the lysosome membrane. The GATOR2 complex is negatively regulated by the upstream amino acid sensors CASTOR1 and SESN2, which sequester the GATOR2 complex in absence of amino acids. In the presence of abundant amino acids, GATOR2 is released from CASTOR1 and SESN2 and activated. Functionally, component of the Nup107-160 subcomplex of the nuclear pore complex (NPC). The Nup107-160 subcomplex is required for the assembly of a functional NPC. The Nup107-160 subcomplex is also required for normal kinetochore microtubule attachment, mitotic progression and chromosome segregation. This subunit plays a role in recruitment of the Nup107-160 subcomplex to the kinetochore. As a component of the GATOR2 complex, functions as an activator of the amino acid-sensing branch of the mTORC1 signaling pathway. The GATOR2 complex indirectly activates mTORC1 through the inhibition of the GATOR1 subcomplex. GATOR2 probably acts as an E3 ubiquitin-protein ligase toward GATOR1. In the presence of abundant amino acids, the GATOR2 complex mediates ubiquitination of the NPRL2 core component of the GATOR1 complex, leading to GATOR1 inactivation. In the absence of amino acids, GATOR2 is inhibited, activating the GATOR1 complex. This Osmerus mordax (Rainbow smelt) protein is Nucleoporin SEH1 (seh1l).